Here is a 193-residue protein sequence, read N- to C-terminus: MGFSEHNLVWLDLEMTGLDPDTDRIIEIATLVTDSQLNILAEGPVLAVRQSEQALAAMDEWNTRTHGESGLIERVRASHLDEAAAEAETLAFLRRWVPERASPMCGNSICQDRRFLYRYMPRLEAWFHYRNLDVSTLKLLANRWHPEVLQGFSKKATHQALEDIRESVAELRHYRAHFLRLPAAGAEGGGAAD.

Residues L8–L171 form the Exonuclease domain. Y129 is a catalytic residue.

This sequence belongs to the oligoribonuclease family.

It is found in the cytoplasm. 3'-to-5' exoribonuclease specific for small oligoribonucleotides. This chain is Oligoribonuclease, found in Alkalilimnicola ehrlichii (strain ATCC BAA-1101 / DSM 17681 / MLHE-1).